A 757-amino-acid chain; its full sequence is Nitrogen fixation protein FixI (757 aa).

Residues 1 to 121 (MSCCASSAAI…GEEEGDDLLK (121 aa)) are Cytoplasmic-facing. Residues 37–107 (RQTELSVPNA…AIAERGYQTH (71 aa)) form the HMA domain. Positions 48 and 51 each coordinate a metal cation. Residues 122-143 (QLILAVAVSGFAATNIMLLSVS) form a helical membrane-spanning segment. The Extracellular segment spans residues 144–158 (VWSGADAATRDLFHW). The helical transmembrane segment at 159–178 (ISALIAGPALIYAGRFFYKS) threads the bilayer. Residues 179 to 185 (AWNAIRH) are Cytoplasmic-facing. The helical transmembrane segment at 186–206 (GRTNMDVPIALAVSLSYGMSL) threads the bilayer. The Extracellular portion of the chain corresponds to 207–218 (HETIGHGEHAWF). A helical transmembrane segment spans residues 219–239 (DASVTLLFFLLIGRTLDHMMR). The Cytoplasmic portion of the chain corresponds to 240 to 368 (GRARTAISGL…RARYRRIADR (129 aa)). A helical transmembrane segment spans residues 369 to 391 (AARYYSPAVHLLALLTFVGWMLV). Over 392–398 (EGDVRHA) the chain is Extracellular. A helical transmembrane segment spans residues 399-416 (MLVAVAVLIITCPCALGL). Over 417-688 (AVPVVQVVAA…ETSRHAGQLI (272 aa)) the chain is Cytoplasmic. D454 acts as the 4-aspartylphosphate intermediate in catalysis. 2 residues coordinate Mg(2+): D634 and D638. A helical membrane pass occupies residues 689 to 708 (RQNFALAIGYNVIAVPIAIL). The Extracellular segment spans residues 709-713 (GYATP). A helical transmembrane segment spans residues 714 to 732 (LVAAVAMSSSSLVVVFNAL). Residues 733–757 (RLKRSLAAGRGATPGTLIHSGAVTS) lie on the Cytoplasmic side of the membrane.

It belongs to the cation transport ATPase (P-type) (TC 3.A.3) family. Type IB subfamily.

The protein resides in the cell membrane. The enzyme catalyses ATP + H2O = ADP + phosphate + H(+). Its function is as follows. FixI is a pump of a specific cation involved in symbiotic nitrogen fixation. The four proteins FixG, FixH, FixI, and FixS may participate in a membrane-bound complex coupling the FixI cation pump with a redox process catalyzed by FixG. The sequence is that of Nitrogen fixation protein FixI (fixI) from Rhizobium meliloti (strain 1021) (Ensifer meliloti).